The chain runs to 505 residues: 6-phosphofructo-2-kinase/fructose-2,6-bisphosphatase 2 (505 aa).

The disordered stretch occupies residues 1-20; it reads MSGASSSEQNNNSYETKTPN. Residue serine 2 is modified to N-acetylserine. The tract at residues 2–248 is 6-phosphofructo-2-kinase; sequence SGASSSEQNN…VYYLMNIHVQ (247 aa). The residue at position 29 (serine 29) is a Phosphoserine; by PKA. 45–53 lines the ATP pocket; sequence GLPARGKTY. The beta-D-fructose 6-phosphate site is built by arginine 78 and arginine 102. Residue aspartate 128 is part of the active site. The beta-D-fructose 6-phosphate site is built by threonine 130 and arginine 136. Cysteine 158 is an active-site residue. 167-172 is a binding site for ATP; it reads NILEVK. Beta-D-fructose 6-phosphate-binding residues include lysine 172, arginine 193, and tyrosine 197. The interval 249 to 505 is fructose-2,6-bisphosphatase; the sequence is PRTIYLCRHG…RAQDMQEGAD (257 aa). Arginine 256 contributes to the beta-D-fructose 2,6-bisphosphate binding site. The active-site Tele-phosphohistidine intermediate is the histidine 257. The beta-D-fructose 2,6-bisphosphate site is built by asparagine 263 and glycine 269. The Proton donor/acceptor role is filled by glutamate 326. Beta-D-fructose 2,6-bisphosphate is bound by residues tyrosine 337, arginine 351, lysine 355, tyrosine 366, glutamine 392, and arginine 396. 348–351 serves as a coordination point for ATP; the sequence is FALR. Residues 392 to 396 and tyrosine 428 each bind ATP; that span reads QAVMR. The interval 445–505 is disordered; sequence HRDKPTNNFP…RAQDMQEGAD (61 aa). The segment covering 450–476 has biased composition (polar residues); it reads TNNFPKNQTPVRMRRNSFTPLSSSNTI. Position 466 is a phosphoserine; by AMPK (serine 466). 2 positions are modified to phosphothreonine: threonine 468 and threonine 475. Serine 483 carries the post-translational modification Phosphoserine; by BRAF. Serine 486 and serine 493 each carry phosphoserine.

The protein in the C-terminal section; belongs to the phosphoglycerate mutase family. Homodimer. Forms a heterodimer with PFKFB3. Phosphorylation by AMPK stimulates activity. Heart.

The enzyme catalyses beta-D-fructose 2,6-bisphosphate + H2O = beta-D-fructose 6-phosphate + phosphate. It catalyses the reaction beta-D-fructose 6-phosphate + ATP = beta-D-fructose 2,6-bisphosphate + ADP + H(+). Phosphorylation results in the activation of the kinase activity. In terms of biological role, synthesis and degradation of fructose 2,6-bisphosphate. In Homo sapiens (Human), this protein is 6-phosphofructo-2-kinase/fructose-2,6-bisphosphatase 2.